Here is a 231-residue protein sequence, read N- to C-terminus: 2-C-methyl-D-erythritol 4-phosphate cytidylyltransferase (231 aa).

It belongs to the IspD/TarI cytidylyltransferase family. IspD subfamily.

It catalyses the reaction 2-C-methyl-D-erythritol 4-phosphate + CTP + H(+) = 4-CDP-2-C-methyl-D-erythritol + diphosphate. It functions in the pathway isoprenoid biosynthesis; isopentenyl diphosphate biosynthesis via DXP pathway; isopentenyl diphosphate from 1-deoxy-D-xylulose 5-phosphate: step 2/6. Functionally, catalyzes the formation of 4-diphosphocytidyl-2-C-methyl-D-erythritol from CTP and 2-C-methyl-D-erythritol 4-phosphate (MEP). This is 2-C-methyl-D-erythritol 4-phosphate cytidylyltransferase from Shewanella pealeana (strain ATCC 700345 / ANG-SQ1).